Here is an 89-residue protein sequence, read N- to C-terminus: Small ribosomal subunit protein uS15 (89 aa).

Belongs to the universal ribosomal protein uS15 family. In terms of assembly, part of the 30S ribosomal subunit. Forms a bridge to the 50S subunit in the 70S ribosome, contacting the 23S rRNA.

One of the primary rRNA binding proteins, it binds directly to 16S rRNA where it helps nucleate assembly of the platform of the 30S subunit by binding and bridging several RNA helices of the 16S rRNA. Functionally, forms an intersubunit bridge (bridge B4) with the 23S rRNA of the 50S subunit in the ribosome. This is Small ribosomal subunit protein uS15 from Rhizobium etli (strain CIAT 652).